The chain runs to 868 residues: MREKPEGGKGMAEHTPLMKQYFAAKAEYPDLLLFFRMGDFYELFHQDARKAARLLDITLTQRGSSGGTPIPMAGVPVHAYEGYLARLIALGESVAICEQIGDPGLAKGLVERKVVRIVTPGTITEEALLEERRDTLLMALSRTKNCYGLAWADLAGGRFLVNEVDSEEALEAELARLEPAELLLPDEDAWPEYLQQRNGVRRRPPWLFDADSGRRKLLAFFKLHDLSGFGIENNPQATAAAGALLGYIEETQKQRLPHLTSITMETVGEAITMNAATRRHLELDTRVDGESRHTLLGVLDSTVTPMGGRLLRRWLHRPLRLREVVRQRHAAVGSMIDSDLDNKLRETFRRLGDMERILTRVALRSARPRDISTLRDSLSLLPRLRELLNASDSPRLRVLYAELGEHDSTASLLVKAVAEQPPLKLTDGGVIAPEYDVELDELRKLSNNADQFLIDLETRERESSGISTLKVGYNRVHGYYIEISKGQADKAPVHYTRRQTLTNAERYITEELKAFEDKVLSARDRALAREKLLYEQLLDTVGAQLEPLKRCAAALSELDVLVCFAERAQTLDWVRPELEHTSCLHIEGGRHPVVEAVREQRFEPNDLYLHPERRMLVITGPNMGGKSTYMRQNALIVLLAYIGSYVPASRALIGPIDRIMTRIGAGDDLARGQSTFMLEMTETSYILHHATAQSLVLMDEIGRGTSTYDGLALADAVARHLAHINRCYTLFATHYFELTALAEETYEGGLSGIANVHFDAVEHSERLVFMHTVKDGPANRSFGLQVAALAGLPAATVAQARRRLAELEQRGRESHVSEITQLELDAPQQCNLFASAPSAAQEALVALHPDELTPKQALEALYRLKALL.

620–627 (GPNMGGKS) contributes to the ATP binding site.

Belongs to the DNA mismatch repair MutS family.

Functionally, this protein is involved in the repair of mismatches in DNA. It is possible that it carries out the mismatch recognition step. This protein has a weak ATPase activity. The polypeptide is DNA mismatch repair protein MutS (Xylella fastidiosa (strain Temecula1 / ATCC 700964)).